A 185-amino-acid polypeptide reads, in one-letter code: GTP cyclohydrolase 1 (185 aa).

Residues C75, H78, and C146 each coordinate Zn(2+).

This sequence belongs to the GTP cyclohydrolase I family. Homomer.

It carries out the reaction GTP + H2O = 7,8-dihydroneopterin 3'-triphosphate + formate + H(+). It functions in the pathway cofactor biosynthesis; 7,8-dihydroneopterin triphosphate biosynthesis; 7,8-dihydroneopterin triphosphate from GTP: step 1/1. This chain is GTP cyclohydrolase 1, found in Clostridium kluyveri (strain NBRC 12016).